A 453-amino-acid chain; its full sequence is Trigger factor (453 aa).

Residues 171–256 (GDRITISFKG…VSLIEAPEEL (86 aa)) form the PPIase FKBP-type domain.

Belongs to the FKBP-type PPIase family. Tig subfamily.

The protein resides in the cytoplasm. It catalyses the reaction [protein]-peptidylproline (omega=180) = [protein]-peptidylproline (omega=0). In terms of biological role, involved in protein export. Acts as a chaperone by maintaining the newly synthesized protein in an open conformation. Functions as a peptidyl-prolyl cis-trans isomerase. This chain is Trigger factor, found in Nitrobacter winogradskyi (strain ATCC 25391 / DSM 10237 / CIP 104748 / NCIMB 11846 / Nb-255).